The following is a 213-amino-acid chain: Small ribosomal subunit protein uS5 (213 aa).

The interval 1 to 42 (MSERDRNGGRSADNNRNDRNERGGRNDRGGRNDRRNNQQDER) is disordered. The 64-residue stretch at 45 to 108 (YIERVVTINR…EEARKNFFRV (64 aa)) folds into the S5 DRBM domain.

The protein belongs to the universal ribosomal protein uS5 family. Part of the 30S ribosomal subunit. Contacts proteins S4 and S8.

Its function is as follows. With S4 and S12 plays an important role in translational accuracy. In terms of biological role, located at the back of the 30S subunit body where it stabilizes the conformation of the head with respect to the body. The chain is Small ribosomal subunit protein uS5 from Corynebacterium urealyticum (strain ATCC 43042 / DSM 7109).